A 142-amino-acid chain; its full sequence is Large ribosomal subunit protein uL11 (142 aa).

It belongs to the universal ribosomal protein uL11 family. As to quaternary structure, part of the ribosomal stalk of the 50S ribosomal subunit. Interacts with L10 and the large rRNA to form the base of the stalk. L10 forms an elongated spine to which L12 dimers bind in a sequential fashion forming a multimeric L10(L12)X complex. Post-translationally, one or more lysine residues are methylated.

Its function is as follows. Forms part of the ribosomal stalk which helps the ribosome interact with GTP-bound translation factors. The polypeptide is Large ribosomal subunit protein uL11 (Ruthia magnifica subsp. Calyptogena magnifica).